Consider the following 283-residue polypeptide: Bifunctional protein FolD (283 aa).

NADP(+)-binding positions include 165–167 and serine 190; that span reads GRS.

It belongs to the tetrahydrofolate dehydrogenase/cyclohydrolase family. Homodimer.

The catalysed reaction is (6R)-5,10-methylene-5,6,7,8-tetrahydrofolate + NADP(+) = (6R)-5,10-methenyltetrahydrofolate + NADPH. It carries out the reaction (6R)-5,10-methenyltetrahydrofolate + H2O = (6R)-10-formyltetrahydrofolate + H(+). Its pathway is one-carbon metabolism; tetrahydrofolate interconversion. In terms of biological role, catalyzes the oxidation of 5,10-methylenetetrahydrofolate to 5,10-methenyltetrahydrofolate and then the hydrolysis of 5,10-methenyltetrahydrofolate to 10-formyltetrahydrofolate. This Methylibium petroleiphilum (strain ATCC BAA-1232 / LMG 22953 / PM1) protein is Bifunctional protein FolD.